A 276-amino-acid polypeptide reads, in one-letter code: MTFAASVVRTAEGDGFTPPGPHDFDLPAIGGGHDTFEMFGQSFVLGVTKPMLQLVLAAIVLFVFFFAAARKRAMVPSRLQFVGEGFYGFVRNSLGRDIIGHDFAKFVPYLFTLFFFILLNNAFGSIPFIEFPTFSRSGMVYGLAVLSWVIYNAAGISKHGFVGYLKLQTVPGGIRGPILALLIPLEFMSNILVRPVTLALRLFANMFAGHLLLILFALGGEYILTEMSVQYAPVGILAWLMFVAVAFLEMLIQFLQAYVFVLLNAMYISGAVADEH.

7 helical membrane-spanning segments follow: residues 49–69, 109–129, 137–157, 173–193, 203–223, 232–252, and 253–273; these read KPML…FAAA, YLFT…IPFI, SGMV…AGIS, GIRG…NILV, FANM…GEYI, APVG…EMLI, and QFLQ…GAVA.

The protein belongs to the ATPase A chain family. F-type ATPases have 2 components, CF(1) - the catalytic core - and CF(0) - the membrane proton channel. CF(1) has five subunits: alpha(3), beta(3), gamma(1), delta(1), epsilon(1). CF(0) has three main subunits: a(1), b(2) and c(9-12). The alpha and beta chains form an alternating ring which encloses part of the gamma chain. CF(1) is attached to CF(0) by a central stalk formed by the gamma and epsilon chains, while a peripheral stalk is formed by the delta and b chains.

Its subcellular location is the cell membrane. Its function is as follows. Key component of the proton channel; it plays a direct role in the translocation of protons across the membrane. This Nocardioides sp. (strain ATCC BAA-499 / JS614) protein is ATP synthase subunit a.